An 84-amino-acid chain; its full sequence is LYR motif-containing protein 4B (84 aa).

Belongs to the complex I LYR family.

This Salmo salar (Atlantic salmon) protein is LYR motif-containing protein 4B (lyrm4b).